Here is a 343-residue protein sequence, read N- to C-terminus: Probable transcription factor MYB58 (343 aa).

Residues 1 to 30 form a disordered region; the sequence is MARAPGGVRRRSGRRGAGGGGAGGGGEALR. The segment covering 15 to 27 has biased composition (gly residues); the sequence is RGAGGGGAGGGGE. 2 HTH myb-type domains span residues 26 to 78 and 79 to 134; these read GEAL…VNKL and RPNL…KRLA. 2 consecutive DNA-binding regions (H-T-H motif) follow at residues 54 to 77 and 107 to 130; these read WSSIRSKGLLPRTGKSCRLRWVNK and WARIATYLQGRTDNDVKNFWSTRQ. Disordered regions lie at residues 137 to 169, 219 to 238, and 307 to 343; these read LRGPLPAARPNKHNSGKGKAPSSSSLDSQTATF, PPADGEASSSNAAQSAPPPL, and DDLPPNMFDDAVDQPPPPPPPPPPPSPSPSPSRDDVL. The span at 157–169 shows a compositional bias: polar residues; that stretch reads PSSSSLDSQTATF. Positions 320–336 are enriched in pro residues; it reads QPPPPPPPPPPPSPSPS.

The protein resides in the nucleus. Probable transcription factor. This is Probable transcription factor MYB58 from Oryza sativa subsp. japonica (Rice).